The sequence spans 347 residues: Magnesium-protoporphyrin IX monomethyl ester [oxidative] cyclase (347 aa).

The protein belongs to the AcsF family. Fe cation is required as a cofactor.

It catalyses the reaction Mg-protoporphyrin IX 13-monomethyl ester + 3 NADPH + 3 O2 + 2 H(+) = 3,8-divinyl protochlorophyllide a + 3 NADP(+) + 5 H2O. The protein operates within porphyrin-containing compound metabolism; chlorophyll biosynthesis (light-independent). Its function is as follows. Catalyzes the formation of the isocyclic ring in chlorophyll biosynthesis. Mediates the cyclase reaction, which results in the formation of divinylprotochlorophyllide (Pchlide) characteristic of all chlorophylls from magnesium-protoporphyrin IX 13-monomethyl ester (MgPMME). This is Magnesium-protoporphyrin IX monomethyl ester [oxidative] cyclase from Prochlorococcus marinus (strain SARG / CCMP1375 / SS120).